Here is a 512-residue protein sequence, read N- to C-terminus: Protein SHC1 (512 aa).

Positions 101–113 (EQDEFENDVEDDA) are enriched in acidic residues. Disordered stretches follow at residues 101–122 (EQDE…EKSQ) and 144–164 (DGNS…ESVA). Sel1-like repeat units lie at residues 318 to 353 (PDAQ…KRMH), 354 to 389 (IESV…TKNH), 390 to 429 (PAAM…SMAS), and 433 to 470 (CGAP…ALGH).

Belongs to the SKT5 family.

The protein localises to the cytoplasm. It localises to the cytoplasmic granule membrane. Its function is as follows. Required for the activation of chitin synthase III (CHS3) activity during the sporulation process. The sequence is that of Protein SHC1 (SHC1) from Saccharomyces cerevisiae (strain ATCC 204508 / S288c) (Baker's yeast).